Reading from the N-terminus, the 294-residue chain is 4-hydroxy-tetrahydrodipicolinate synthase (294 aa).

Thr45 provides a ligand contact to pyruvate. Catalysis depends on Tyr133, which acts as the Proton donor/acceptor. Residue Lys161 is the Schiff-base intermediate with substrate of the active site. Ile203 serves as a coordination point for pyruvate.

This sequence belongs to the DapA family. As to quaternary structure, homotetramer; dimer of dimers.

The protein localises to the cytoplasm. The catalysed reaction is L-aspartate 4-semialdehyde + pyruvate = (2S,4S)-4-hydroxy-2,3,4,5-tetrahydrodipicolinate + H2O + H(+). Its pathway is amino-acid biosynthesis; L-lysine biosynthesis via DAP pathway; (S)-tetrahydrodipicolinate from L-aspartate: step 3/4. Its function is as follows. Catalyzes the condensation of (S)-aspartate-beta-semialdehyde [(S)-ASA] and pyruvate to 4-hydroxy-tetrahydrodipicolinate (HTPA). The sequence is that of 4-hydroxy-tetrahydrodipicolinate synthase from Buchnera aphidicola subsp. Acyrthosiphon pisum (strain APS) (Acyrthosiphon pisum symbiotic bacterium).